The chain runs to 453 residues: Chromosomal replication initiator protein DnaA (453 aa).

A domain I, interacts with DnaA modulators region spans residues 1–73 (MSKEEIWDKV…ADLIEKAIGT (73 aa)). Residues 73–114 (TKLMPNFVIQEDLTEDKQVKDSAKAKSEAKPDVQAPQNSSED) are domain II. Positions 91 to 103 (VKDSAKAKSEAKP) are enriched in basic and acidic residues. Residues 91–113 (VKDSAKAKSEAKPDVQAPQNSSE) are disordered. A domain III, AAA+ region region spans residues 115–331 (QFNVHNTFET…GALTRVIAYS (217 aa)). ATP is bound by residues glycine 159, glycine 161, lysine 162, and threonine 163. Positions 332 to 453 (RLQNEAITTE…ENLEKEIRNQ (122 aa)) are domain IV, binds dsDNA.

Belongs to the DnaA family. As to quaternary structure, oligomerizes as a right-handed, spiral filament on DNA at oriC.

The protein resides in the cytoplasm. Its function is as follows. Plays an essential role in the initiation and regulation of chromosomal replication. ATP-DnaA binds to the origin of replication (oriC) to initiate formation of the DNA replication initiation complex once per cell cycle. Binds the DnaA box (a 9 base pair repeat at the origin) and separates the double-stranded (ds)DNA. Forms a right-handed helical filament on oriC DNA; dsDNA binds to the exterior of the filament while single-stranded (ss)DNA is stabiized in the filament's interior. The ATP-DnaA-oriC complex binds and stabilizes one strand of the AT-rich DNA unwinding element (DUE), permitting loading of DNA polymerase. After initiation quickly degrades to an ADP-DnaA complex that is not apt for DNA replication. Binds acidic phospholipids. The protein is Chromosomal replication initiator protein DnaA of Staphylococcus carnosus (strain TM300).